The primary structure comprises 677 residues: Vertnin (677 aa).

Disordered stretches follow at residues 356–376 (GSTG…SSPE) and 458–490 (HSGS…KLSP). Positions 458–472 (HSGSSEEGSDADKSQ) are enriched in basic and acidic residues.

This sequence belongs to the vertnin family.

The protein resides in the nucleus. Functionally, functions as a transcriptional repressor that modulates bmp2b expression during dorsoventral patterning. The chain is Vertnin (vrtn) from Danio rerio (Zebrafish).